A 196-amino-acid chain; its full sequence is Peptide deformylase (196 aa).

Fe cation is bound by residues Cys-105 and His-147. The active site involves Glu-148. Fe cation is bound at residue His-151.

This sequence belongs to the polypeptide deformylase family. Requires Fe(2+) as cofactor.

The catalysed reaction is N-terminal N-formyl-L-methionyl-[peptide] + H2O = N-terminal L-methionyl-[peptide] + formate. In terms of biological role, removes the formyl group from the N-terminal Met of newly synthesized proteins. Requires at least a dipeptide for an efficient rate of reaction. N-terminal L-methionine is a prerequisite for activity but the enzyme has broad specificity at other positions. The polypeptide is Peptide deformylase (Christiangramia forsetii (strain DSM 17595 / CGMCC 1.15422 / KT0803) (Gramella forsetii)).